The sequence spans 332 residues: tRNA-dihydrouridine synthase B (332 aa).

Residues 16 to 18 and Gln70 contribute to the FMN site; that span reads PMA. Residue Cys100 is the Proton donor of the active site. Residues Lys139, 200 to 202, and 224 to 225 each bind FMN; these read NGD and GR.

It belongs to the Dus family. DusB subfamily. It depends on FMN as a cofactor.

The enzyme catalyses a 5,6-dihydrouridine in tRNA + NAD(+) = a uridine in tRNA + NADH + H(+). The catalysed reaction is a 5,6-dihydrouridine in tRNA + NADP(+) = a uridine in tRNA + NADPH + H(+). In terms of biological role, catalyzes the synthesis of 5,6-dihydrouridine (D), a modified base found in the D-loop of most tRNAs, via the reduction of the C5-C6 double bond in target uridines. The sequence is that of tRNA-dihydrouridine synthase B from Xanthomonas campestris pv. campestris (strain ATCC 33913 / DSM 3586 / NCPPB 528 / LMG 568 / P 25).